The primary structure comprises 447 residues: Probable protein phosphatase 2C 71 (447 aa).

One can recognise a PPM-type phosphatase domain in the interval 33 to 279; that stretch reads SYGYASSAGK…DNITCVVVRF (247 aa). Residues aspartate 69, glycine 70, aspartate 231, and aspartate 270 each coordinate Mn(2+). Low complexity predominate over residues 284–297; that stretch reads SANNNGSSSSEEAN. Residues 284-447 are disordered; sequence SANNNGSSSS…ARKTTPSIFN (164 aa). Over residues 305–331 the composition is skewed to basic and acidic residues; it reads NDSDHKISAKETNQDHTTVNKDLDRNT. 2 stretches are compositionally biased toward polar residues: residues 346–374 and 392–423; these read ADNS…TGEK and KVPN…GSTG. Basic and acidic residues predominate over residues 424–438; sequence ERNRKPIKVHSDSAA.

The protein belongs to the PP2C family. Mg(2+) serves as cofactor. Requires Mn(2+) as cofactor.

It carries out the reaction O-phospho-L-seryl-[protein] + H2O = L-seryl-[protein] + phosphate. It catalyses the reaction O-phospho-L-threonyl-[protein] + H2O = L-threonyl-[protein] + phosphate. The polypeptide is Probable protein phosphatase 2C 71 (Arabidopsis thaliana (Mouse-ear cress)).